Consider the following 560-residue polypeptide: Interferon alpha/beta receptor 1 (560 aa).

The signal sequence occupies residues 1–24 (MLGLLGATTLMLVAGAPWVLPAGG). The Extracellular segment spans residues 25-437 (ADLRSPENVV…EKTKPGSTSQ (413 aa)). 4 Fibronectin type-III domains span residues 29-125 (SPEN…FQEA), 133-224 (HLEA…INTT), 231-329 (SPEN…TEMQ), and 333-433 (FPPV…TKPG). An N-linked (GlcNAc...) asparagine glycan is attached at N55. Residues C76 and C84 are joined by a disulfide bond. 3 N-linked (GlcNAc...) asparagine glycosylation sites follow: N85, N108, and N172. C199 and C220 form a disulfide bridge. N222, N249, and N254 each carry an N-linked (GlcNAc...) asparagine glycan. C283 and C291 are oxidised to a cystine. N313, N377, and N417 each carry an N-linked (GlcNAc...) asparagine glycan. The cysteines at positions 404 and 427 are disulfide-linked. Residues 438–458 (AWLIAGILSAILLFPAVFYGV) traverse the membrane as a helical segment. The Cytoplasmic segment spans residues 459-560 (KVVSRCINYV…GEEILRQAAV (102 aa)). A lipid anchor (S-palmitoyl cysteine) is attached at C464. 2 positions are modified to phosphotyrosine; by TYK2: Y467 and Y482. Residues 492 to 501 (LLSTSEEQTE) are important for interaction with TYK2. Residues S496 and S536 each carry the phosphoserine modification. Residues 520 to 560 (QIDDNHSRCSSQTNRDSGVYSNEDENSGSKIGEEILRQAAV) form a disordered region. The span at 527-539 (RCSSQTNRDSGVY) shows a compositional bias: polar residues. Over residues 550-560 (IGEEILRQAAV) the composition is skewed to basic and acidic residues.

This sequence belongs to the type II cytokine receptor family. In terms of assembly, heterodimer with IFNAR2; forming the receptor for type I interferon. Interacts with TYK2. Interacts with STAT1 and STAT2; the interaction requires its phosphorylation at Tyr-482. Interacts (serine-phosphorylated form) with FBXW11, the substrate recognition component of a SCF (SKP1-CUL1-F-box protein) E3 ubiquitin-protein ligase complex. Interacts with SHMT2; this promotes interaction with ABRAXAS2 and the BRISC complex. Interacts with TRIM10; this interaction prevents association between IFNAR1 and TYK2. In terms of processing, ubiquitinated, leading to its internalization and degradation. Polyubiquitinated via 'Lys-48'-linked and 'Lys-63'-linked ubiquitin chains, leading to receptor internalization and lysosomal degradation. The 'Lys-63'-linked ubiquitin chains are cleaved off by the BRISC complex. Phosphorylated on tyrosine residues in response to interferon-binding: phosphorylation by TYK2 tyrosine kinase creates docking sites for STAT proteins. Phosphorylated on serine residues in response to interferon binding; this promotes interaction with FBXW11 and ubiquitination. Post-translationally, palmitoylation at Cys-464 is required for the activation of STAT1 and STAT2.

The protein localises to the cell membrane. It localises to the late endosome. Its subcellular location is the lysosome. Its function is as follows. Together with IFNAR2, forms the heterodimeric receptor for type I interferons (including interferons alpha, beta, epsilon, omega and kappa). Type I interferon binding activates the JAK-STAT signaling cascade, resulting in transcriptional activation or repression of interferon-regulated genes that encode the effectors of the interferon response. Mechanistically, type I interferon-binding brings the IFNAR1 and IFNAR2 subunits into close proximity with one another, driving their associated Janus kinases (JAKs) (TYK2 bound to IFNAR1 and JAK1 bound to IFNAR2) to cross-phosphorylate one another. The activated kinases phosphorylate specific tyrosine residues on the intracellular domains of IFNAR1 and IFNAR2, forming docking sites for the STAT transcription factors. STAT proteins are then phosphorylated by the JAKs, promoting their translocation into the nucleus to regulate expression of interferon-regulated genes. Can also act independently of IFNAR2: form an active IFNB1 receptor by itself and activate a signaling cascade that does not involve activation of the JAK-STAT pathway. The polypeptide is Interferon alpha/beta receptor 1 (IFNAR1) (Sus scrofa (Pig)).